Reading from the N-terminus, the 384-residue chain is Glucans biosynthesis protein C (384 aa).

The next 10 membrane-spanning stretches (helical) occupy residues Ala-17–Trp-37, Phe-54–Leu-74, Val-91–Gln-111, Leu-140–Phe-160, Ala-173–Ile-193, Phe-212–Ile-232, Phe-240–Leu-260, Thr-274–Gly-294, Ala-311–Thr-331, and Leu-338–Ile-358.

This sequence belongs to the acyltransferase 3 family. OpgC subfamily.

It localises to the cell membrane. It functions in the pathway glycan metabolism; osmoregulated periplasmic glucan (OPG) biosynthesis. Functionally, necessary for the succinyl substitution of periplasmic glucans. Could catalyze the transfer of succinyl residues from the cytoplasmic side of the membrane to the nascent glucan backbones on the periplasmic side of the membrane. This is Glucans biosynthesis protein C from Salmonella gallinarum (strain 287/91 / NCTC 13346).